We begin with the raw amino-acid sequence, 257 residues long: Snake venom serine protease KN11 (257 aa).

Positions 1–18 (MVLIRVLANLLILQLSYA) are cleaved as a signal peptide. The propeptide occupies 19–24 (QKSSEL). The region spanning 25–248 (VTGGHPCNIN…HLDWIKSIIA (224 aa)) is the Peptidase S1 domain. Intrachain disulfides connect Cys-31-Cys-162, Cys-49-Cys-65, Cys-97-Cys-255, Cys-141-Cys-209, Cys-173-Cys-188, and Cys-199-Cys-224. Residues His-64 and Asp-109 each act as charge relay system in the active site. N-linked (GlcNAc...) asparagine glycosylation is found at Asn-120 and Asn-121. The Charge relay system role is filled by Ser-203.

The protein belongs to the peptidase S1 family. Snake venom subfamily. Monomer. Expressed by the venom gland.

Its subcellular location is the secreted. Functionally, snake venom serine protease that may act in the hemostasis system of the prey. The protein is Snake venom serine protease KN11 of Trimeresurus stejnegeri (Chinese green tree viper).